We begin with the raw amino-acid sequence, 103 residues long: Small ribosomal subunit protein uS10 (103 aa).

Belongs to the universal ribosomal protein uS10 family. In terms of assembly, part of the 30S ribosomal subunit.

Involved in the binding of tRNA to the ribosomes. This chain is Small ribosomal subunit protein uS10, found in Bordetella parapertussis (strain 12822 / ATCC BAA-587 / NCTC 13253).